The following is a 258-amino-acid chain: UPF0246 protein ACIAD2218 (258 aa).

Belongs to the UPF0246 family.

The chain is UPF0246 protein ACIAD2218 from Acinetobacter baylyi (strain ATCC 33305 / BD413 / ADP1).